The primary structure comprises 145 residues: Holo-[acyl-carrier-protein] synthase (145 aa).

Mg(2+) contacts are provided by Asp-9 and Glu-59.

Belongs to the P-Pant transferase superfamily. AcpS family. Mg(2+) serves as cofactor.

The protein resides in the cytoplasm. It catalyses the reaction apo-[ACP] + CoA = holo-[ACP] + adenosine 3',5'-bisphosphate + H(+). In terms of biological role, transfers the 4'-phosphopantetheine moiety from coenzyme A to a Ser of acyl-carrier-protein. In Nocardia farcinica (strain IFM 10152), this protein is Holo-[acyl-carrier-protein] synthase.